The chain runs to 181 residues: BURP domain-containing protein 7 (181 aa).

Positions Met1–Ala21 are cleaved as a signal peptide. Positions Phe65–Pro181 constitute a BURP domain. Residues Gln112 to Pro181 form a disordered region. The segment covering Arg128 to Ser143 has biased composition (basic residues). A compositionally biased stretch (low complexity) spans Ser144–Ala157. Basic residues predominate over residues Gly170–Pro181.

In terms of tissue distribution, expressed in roots, stems, leaves and shoot.

This chain is BURP domain-containing protein 7 (BURP7), found in Oryza sativa subsp. japonica (Rice).